Here is an 81-residue protein sequence, read N- to C-terminus: ATP synthase subunit c, chloroplastic (81 aa).

2 helical membrane-spanning segments follow: residues 3–23 (PIIS…ASIG) and 57–77 (LAFM…LLFA).

The protein belongs to the ATPase C chain family. In terms of assembly, F-type ATPases have 2 components, F(1) - the catalytic core - and F(0) - the membrane proton channel. F(1) has five subunits: alpha(3), beta(3), gamma(1), delta(1), epsilon(1). F(0) has four main subunits: a(1), b(1), b'(1) and c(10-14). The alpha and beta chains form an alternating ring which encloses part of the gamma chain. F(1) is attached to F(0) by a central stalk formed by the gamma and epsilon chains, while a peripheral stalk is formed by the delta, b and b' chains.

It localises to the plastid. It is found in the chloroplast thylakoid membrane. F(1)F(0) ATP synthase produces ATP from ADP in the presence of a proton or sodium gradient. F-type ATPases consist of two structural domains, F(1) containing the extramembraneous catalytic core and F(0) containing the membrane proton channel, linked together by a central stalk and a peripheral stalk. During catalysis, ATP synthesis in the catalytic domain of F(1) is coupled via a rotary mechanism of the central stalk subunits to proton translocation. Functionally, key component of the F(0) channel; it plays a direct role in translocation across the membrane. A homomeric c-ring of between 10-14 subunits forms the central stalk rotor element with the F(1) delta and epsilon subunits. The sequence is that of ATP synthase subunit c, chloroplastic from Phaseolus vulgaris (Kidney bean).